Consider the following 110-residue polypeptide: BET1-like protein (110 aa).

Residues 1 to 85 lie on the Cytoplasmic side of the membrane; the sequence is MADPWNRGHG…MVRSGRDNRK (85 aa). The 63-residue stretch at 14 to 76 folds into the t-SNARE coiled-coil homology domain; it reads DMLDAENKRM…TGSVKRFSTM (63 aa). A helical; Anchor for type IV membrane protein transmembrane segment spans residues 86–106; the sequence is ILCYVSVGLVVAFFLLYYLVS. The Lumenal segment spans residues 107–110; it reads RMQN.

In terms of assembly, component of a SNARE complex consisting of stx5, ykt6, gosr2 and bet1l.

It localises to the golgi apparatus membrane. Functionally, vesicle SNARE required for targeting and fusion of retrograde transport vesicles with the Golgi complex. Required for the integrity of the Golgi complex. This Danio rerio (Zebrafish) protein is BET1-like protein (bet1l).